We begin with the raw amino-acid sequence, 149 residues long: Protein RhiC (149 aa).

The N-terminal stretch at 1-23 (MTATLRAFGWLAAFALTVTFAQG) is a signal peptide.

The protein localises to the periplasm. In terms of biological role, may be involved in plant-microbe interaction. The chain is Protein RhiC (rhiC) from Rhizobium leguminosarum bv. viciae.